Consider the following 341-residue polypeptide: Very-long-chain 3-oxoacyl-CoA reductase (341 aa).

Residues 22–42 form a helical membrane-spanning segment; the sequence is AVTGFLLVGIASFAAPLISTI. Residues Leu67, Asp123, Asp131, Asn150, Tyr217, Lys221, Val250, and Thr252 each contribute to the NADP(+) site. Tyr217 serves as the catalytic Proton donor. Lys221 (lowers pKa of active site Tyr) is an active-site residue.

Belongs to the short-chain dehydrogenases/reductases (SDR) family.

The protein localises to the endoplasmic reticulum membrane. It catalyses the reaction a very-long-chain (3R)-3-hydroxyacyl-CoA + NADP(+) = a very-long-chain 3-oxoacyl-CoA + NADPH + H(+). Its pathway is lipid metabolism; fatty acid biosynthesis. In terms of biological role, component of the microsomal membrane bound fatty acid elongation system, which produces the 26-carbon very long-chain fatty acids (VLCFA) from palmitate. Catalyzes the reduction of the 3-ketoacyl-CoA intermediate that is formed in each cycle of fatty acid elongation. VLCFAs serve as precursors for ceramide and sphingolipids. The protein is Very-long-chain 3-oxoacyl-CoA reductase of Pyrenophora tritici-repentis (strain Pt-1C-BFP) (Wheat tan spot fungus).